The following is a 325-amino-acid chain: GMP reductase (325 aa).

Cys173 acts as the Thioimidate intermediate in catalysis. Residue 202–225 coordinates NADP(+); the sequence is IIADGGIRDHGDIAKSVRFGASMV.

This sequence belongs to the IMPDH/GMPR family. GuaC type 2 subfamily.

The catalysed reaction is IMP + NH4(+) + NADP(+) = GMP + NADPH + 2 H(+). Functionally, catalyzes the irreversible NADPH-dependent deamination of GMP to IMP. It functions in the conversion of nucleobase, nucleoside and nucleotide derivatives of G to A nucleotides, and in maintaining the intracellular balance of A and G nucleotides. The sequence is that of GMP reductase from Variovorax paradoxus (strain S110).